The chain runs to 434 residues: Putative ZDHHC-type palmitoyltransferase 1 (434 aa).

2 consecutive transmembrane segments (helical) span residues A25–V45 and I53–I73. The DHHC domain maps to K115 to Y165. C145 serves as the catalytic S-palmitoyl cysteine intermediate. Residues F160–A180 traverse the membrane as a helical segment. N207, N216, N274, N346, N362, N373, N381, N387, and N393 each carry an N-linked (GlcNAc...) asparagine glycan. Residues T262–Q330 are disordered. Residues N267–G316 show a composition bias toward low complexity. Residues T365 to V434 are disordered. Over residues N373 to N387 the composition is skewed to low complexity. A compositionally biased stretch (basic and acidic residues) spans D409–I419. N420 is a glycosylation site (N-linked (GlcNAc...) asparagine). Positions N420–V434 are enriched in polar residues.

It belongs to the DHHC palmitoyltransferase family.

The protein localises to the membrane. The catalysed reaction is L-cysteinyl-[protein] + hexadecanoyl-CoA = S-hexadecanoyl-L-cysteinyl-[protein] + CoA. This chain is Putative ZDHHC-type palmitoyltransferase 1, found in Dictyostelium discoideum (Social amoeba).